We begin with the raw amino-acid sequence, 272 residues long: Cell division protein DivIB (272 aa).

Residues 1–21 lie on the Cytoplasmic side of the membrane; the sequence is MRLSSHGKKTVSTSNNPVFNR. The helical transmembrane segment at 22-42 threads the bilayer; the sequence is IGLFFTAAILFALFLQMLFFL. The region spanning 43–115 is the POTRA domain; that stretch reads RPWQDIKETK…GTAIIRVNEN (73 aa). The Extracellular segment spans residues 43-272; the sequence is RPWQDIKETK…SSSKSSNSSK (230 aa). Residues 253–272 form a disordered region; it reads LSSLSSDKSKSSSKSSNSSK.

It belongs to the FtsQ/DivIB family. DivIB subfamily.

Its subcellular location is the cell membrane. Its function is as follows. Cell division protein that may be involved in stabilizing or promoting the assembly of the division complex. This chain is Cell division protein DivIB, found in Oenococcus oeni (strain ATCC BAA-331 / PSU-1).